The primary structure comprises 375 residues: Trichodiene synthase (375 aa).

The protein belongs to the trichodiene synthase family.

It catalyses the reaction (2E,6E)-farnesyl diphosphate = trichodiene + diphosphate. It functions in the pathway sesquiterpene biosynthesis; trichothecene biosynthesis. Its function is as follows. TS is a member of the terpene cyclase group of enzymes. It catalyzes the isomerization and cyclization of farnesyl pyro-phosphate to form trichodiene, the first cyclic intermediate in the biosynthetic pathway for trichothecenes. It serves to branch trichothecene biosynthesis from the isoprenoid pathway. This Fusarium boothii protein is Trichodiene synthase (TRI5).